Reading from the N-terminus, the 176-residue chain is MARKNQKAPWEEEEEIIWVSKTEMKNDMEDLQKLGEELVGLKPSVLAKFPLSDDLREAINDAQRFKNEAKRRQLQFIGKLMRNEDPEPIQLALDKIRNKHSQATAALHKLETLRDRMIEEGDAVIEEVMVKYPDADRQRFRQLARQAKKEKASNKPPKAFREIFQILKDLYLNEDL.

The protein belongs to the DarP family.

It is found in the cytoplasm. Functionally, member of a network of 50S ribosomal subunit biogenesis factors which assembles along the 30S-50S interface, preventing incorrect 23S rRNA structures from forming. Promotes peptidyl transferase center (PTC) maturation. This chain is Dual-action ribosomal maturation protein DarP, found in Aliivibrio fischeri (strain MJ11) (Vibrio fischeri).